We begin with the raw amino-acid sequence, 502 residues long: ATP synthase subunit alpha (502 aa).

An ATP-binding site is contributed by 169-176 (GDRQTGKT).

Belongs to the ATPase alpha/beta chains family. In terms of assembly, F-type ATPases have 2 components, CF(1) - the catalytic core - and CF(0) - the membrane proton channel. CF(1) has five subunits: alpha(3), beta(3), gamma(1), delta(1), epsilon(1). CF(0) has three main subunits: a(1), b(2) and c(9-12). The alpha and beta chains form an alternating ring which encloses part of the gamma chain. CF(1) is attached to CF(0) by a central stalk formed by the gamma and epsilon chains, while a peripheral stalk is formed by the delta and b chains.

The protein localises to the cell inner membrane. The enzyme catalyses ATP + H2O + 4 H(+)(in) = ADP + phosphate + 5 H(+)(out). Its function is as follows. Produces ATP from ADP in the presence of a proton gradient across the membrane. The alpha chain is a regulatory subunit. The polypeptide is ATP synthase subunit alpha (Geobacter sp. (strain M21)).